A 445-amino-acid chain; its full sequence is Polyadenylate-binding protein RBP47A (445 aa).

The segment covering 1-12 (MQTPNNNGSTDS) has biased composition (polar residues). Disordered regions lie at residues 1 to 45 (MQTP…WQQQ) and 93 to 117 (AAYQ…GGDD). Pro residues predominate over residues 22 to 35 (TPPPPLQQSTPPPQ). 2 stretches are compositionally biased toward low complexity: residues 36 to 45 (QQQQQQWQQQ) and 93 to 108 (AAYQ…SQQQ). RRM domains are found at residues 119–199 (KTLW…WASF), 213–292 (LSIF…IATP), and 327–399 (STIF…WGRS).

The protein belongs to the polyadenylate-binding RBP47 family. In terms of assembly, interacts with the poly(A) tail of mRNA in nucleus. As to expression, expressed in leaves, stems, flowers, and seedlings.

It localises to the nucleus. It is found in the cytoplasmic granule. Its function is as follows. Heterogeneous nuclear ribonucleoprotein (hnRNP)-protein binding the poly(A) tail of mRNA and probably involved in some steps of pre-mRNA maturation. This is Polyadenylate-binding protein RBP47A (RBP47A) from Arabidopsis thaliana (Mouse-ear cress).